We begin with the raw amino-acid sequence, 174 residues long: Shikimate kinase (174 aa).

15–20 (GTGKST) is a binding site for ATP. A Mg(2+)-binding site is contributed by Ser19. Substrate is bound by residues Asp37, Arg61, and Gly82. Arg120 is an ATP binding site. Residue Arg138 participates in substrate binding.

It belongs to the shikimate kinase family. In terms of assembly, monomer. Requires Mg(2+) as cofactor.

Its subcellular location is the cytoplasm. It catalyses the reaction shikimate + ATP = 3-phosphoshikimate + ADP + H(+). Its pathway is metabolic intermediate biosynthesis; chorismate biosynthesis; chorismate from D-erythrose 4-phosphate and phosphoenolpyruvate: step 5/7. In terms of biological role, catalyzes the specific phosphorylation of the 3-hydroxyl group of shikimic acid using ATP as a cosubstrate. In Staphylococcus aureus (strain NCTC 8325 / PS 47), this protein is Shikimate kinase.